The primary structure comprises 701 residues: Polyribonucleotide nucleotidyltransferase (701 aa).

Aspartate 490 and aspartate 496 together coordinate Mg(2+). The KH domain occupies 557-616 (PKVVTMSINPDKIRDVIGPGGKKINEIIDETGVKLDIEQDGTIFIGAVDQAMINRAKEII). Residues 626–694 (GQVYHAKVKR…KQGRVNASHK (69 aa)) enclose the S1 motif domain.

The protein belongs to the polyribonucleotide nucleotidyltransferase family. Requires Mg(2+) as cofactor.

Its subcellular location is the cytoplasm. The catalysed reaction is RNA(n+1) + phosphate = RNA(n) + a ribonucleoside 5'-diphosphate. Functionally, involved in mRNA degradation. Catalyzes the phosphorolysis of single-stranded polyribonucleotides processively in the 3'- to 5'-direction. In Staphylococcus epidermidis (strain ATCC 12228 / FDA PCI 1200), this protein is Polyribonucleotide nucleotidyltransferase.